The following is a 1683-amino-acid chain: ABC transporter 7 (1683 aa).

A helical membrane pass occupies residues 24–44 (DYLRILLPAVVIGLSVLNLGF). Residues 53 to 93 (RSKSPSTHAYAPVSNGDNSRPGAHRTDISPDDDAIAQDDED) form a disordered region. The span at 81–93 (SPDDDAIAQDDED) shows a compositional bias: acidic residues. 4 consecutive transmembrane segments (helical) span residues 127–147 (LSVV…VIAL), 157–177 (TLTG…LATL), 190–210 (HLWN…IGIF), and 221–241 (LAQI…FMAI). An N-linked (GlcNAc...) asparagine glycan is attached at N247. Helical transmembrane passes span 336–356 (GWAV…KAIL) and 368–388 (SVVW…SLGD). In terms of domain architecture, ABC transmembrane type-1 1 spans 338 to 664 (AVMSGMFTFA…LGDMLAHVQE (327 aa)). The tract at residues 451–473 (GDNDESEDGKDGDKDKEDSSDEQ) is disordered. Residue N489 is glycosylated (N-linked (GlcNAc...) asparagine). Transmembrane regions (helical) follow at residues 496–516 (YLHF…VLLY) and 518–538 (VLGM…PVNI). N545 is a glycosylation site (N-linked (GlcNAc...) asparagine). The next 2 membrane-spanning stretches (helical) occupy residues 602-622 (VWAC…FFSF) and 632-648 (PLHP…FMLL). The region spanning 700–949 (IALKDAAFIW…GALGEEIAQK (250 aa)) is the ABC transporter 1 domain. 742 to 749 (GPTGSGKT) contacts ATP. A disordered region spans residues 952 to 998 (SETPNISRIPSRVPSSVGEGSGNTLLDTDGDDHLSKPKNAKKAKKAE). The N-linked (GlcNAc...) asparagine glycan is linked to N956. A helical transmembrane segment spans residues 1016 to 1036 (LYLASMGSWWFWVVAGCIFIS). One can recognise an ABC transmembrane type-1 2 domain in the interval 1028-1351 (VVAGCIFISQ…NILWLVRLYS (324 aa)). A glycan (N-linked (GlcNAc...) asparagine) is linked at N1097. Helical transmembrane passes span 1111 to 1131 (AQYY…TAFL), 1182 to 1202 (VDQE…GITV), and 1204 to 1224 (VVLI…ITIA). N-linked (GlcNAc...) asparagine glycosylation is present at N1277. The next 2 helical transmembrane spans lie at 1304-1324 (LLGD…IGVI) and 1327-1347 (GWAG…LWLV). The region spanning 1392–1649 (VEFINYTTSY…GEGGSFKSMC (258 aa)) is the ABC transporter 2 domain. N-linked (GlcNAc...) asparagine glycosylation is found at N1396 and N1411. 1426 to 1433 (GRTGAGKS) serves as a coordination point for ATP. 2 N-linked (GlcNAc...) asparagine glycosylation sites follow: N1541 and N1552.

The protein belongs to the ABC transporter superfamily.

It localises to the membrane. Its function is as follows. ABC transporter; part of the gene cluster that mediates the biosynthesis of pyriculol and pyriculariol, two heptaketides that induce lesion formation upon application on rice leaves but are dispensable for pathogenicity. With the MFS transporter MFS1, is most likely responsible for pyriculol and pyriculariol secretion and thereby may contribute to intrinsic resistance. This is ABC transporter 7 from Pyricularia oryzae (strain 70-15 / ATCC MYA-4617 / FGSC 8958) (Rice blast fungus).